A 1055-amino-acid chain; its full sequence is MKSASSEQSVERIENGHKKKRNRPQKQNRRSKQSSVPIEDAHVEESLDGRDSSRSKAKDSTSSSKQQRPNTDELEAMRASNVAFNSMPPMRAESGYPRRSASPLLSSPEVSKQLLSKSCPDPRACEQSPGMNGELFQQIEGSSQRKIFSSHWSLDAVTEALEKGEAFKALFRVNAHNRNEAYCKIDGVPTDILINGNVCQSRAVEGDTVVIKLDPLSLWPKMKGFVTESAAKPEGTNSPPEKDDKKARQKNGIDVVEGFEDGFSKNKSSVIGKGAKNGVTPSSPPSLDSCLGSFCEQKGNCSAVDKLCGILSSFPHKRPTGQVVAVVEKSLVRDSIVGLLDVKGWIHYKESDPKRCKSPLSLSDDEYVQLMPADPRFPKLIVPFHVLPGSIRARLENLDPNLEAELVAAQIVDWGEGSPFPVAQITHLFGRGSELEPQINAILYQNSVCDSDFSPGSLTSLPRVPWEVPEEEVQRRKDLRDLCVLTIDPSTATDLDDALSVQSLPGGFFRVGVHIADVSYFVLPETALDTEARFRSTSVYLMQRKISMLPPLLSENVGSLSPGADRLAFSILWDLNREGDVIDRWIGRTIIRSCCKLSYDHAQDIIDGKSDVAENGWPALHGSFKWCDVTRSVKQLSEISTTLRQKRFRNGALQLENSKPVFLFDEHGVPYDFVTCSRKGSNFLVEEFMLLANMTAAEVISQAYRASSLLRRHPEPNTRKLKEFEGFCSKHGMDLDISSSGQLQDSLEKITGNLKDDSVFVDILNNYAIKPMQLASYFCTGNLKDSVAEWGHYALAVPLYTHFTSPLRRYPDIVVHRALAAALEAEELYSKQKQTAIDEGRSCFTGIHFNKDAAESIEGKEALSVAALKHGVPSTEILSDVAAYCNERKLAARKVRDACDKLYTWFVLKQKEIFPCEARVMNLGSRFMTVYISKLGIERRIYYDQIEGLCADWLEATSTLIVDKLYSKRGGRGFFKPMKEAVYLVSPCEVCVAKCSALSVHDTESPEAVSIDEVAPAVFPLTIQLFSTIPVVLHAVGGDDGPLDIGARLYMSSYY.

Disordered regions lie at residues 1 to 109 and 229 to 249; these read MKSA…SSPE and SAAK…KARQ. The span at 17 to 32 shows a compositional bias: basic residues; the sequence is HKKKRNRPQKQNRRSK. Over residues 39–59 the composition is skewed to basic and acidic residues; sequence EDAHVEESLDGRDSSRSKAKD. Over residues 97 to 108 the composition is skewed to low complexity; the sequence is PRRSASPLLSSP. A CSD2 domain is found at 367–446; sequence YVQLMPADPR…PQINAILYQN (80 aa). In terms of domain architecture, RNB spans 476-824; that stretch reads RKDLRDLCVL…VHRALAAALE (349 aa). 2 residues coordinate Mg(2+): Asp-488 and Asp-497.

It belongs to the RNR ribonuclease family. DIS3L2 subfamily.

Its subcellular location is the cytoplasm. Its function is as follows. Probable inactive 3'-5'-exoribonuclease. Is unable to complement the growth defect of a yeast mutant lacking RRP44 exonuclease. The protein is Inactive exonuclease DIS3L2 of Arabidopsis thaliana (Mouse-ear cress).